The chain runs to 101 residues: A-type ATP synthase subunit K (101 aa).

The next 3 membrane-spanning stretches (helical) occupy residues 5–25, 37–57, and 75–95; these read WLPF…AQAP, IGAG…VGMA, and ILIF…FAVL.

This sequence belongs to the V-ATPase proteolipid subunit family. In terms of assembly, has multiple subunits with at least A(3), B(3), C, D, E, F, H, I and proteolipid K(x). In terms of processing, the N-terminus is blocked.

The protein localises to the cell membrane. In terms of biological role, component of the A-type ATP synthase that produces ATP from ADP in the presence of a proton gradient across the membrane. This is A-type ATP synthase subunit K from Sulfurisphaera tokodaii (strain DSM 16993 / JCM 10545 / NBRC 100140 / 7) (Sulfolobus tokodaii).